A 122-amino-acid chain; its full sequence is NADPH-dependent 7-cyano-7-deazaguanine reductase (122 aa).

C34 acts as the Thioimide intermediate in catalysis. Catalysis depends on D41, which acts as the Proton donor. Residues V56 to L58 and H75 to E76 each bind substrate.

This sequence belongs to the GTP cyclohydrolase I family. QueF type 1 subfamily.

It localises to the cytoplasm. It catalyses the reaction 7-aminomethyl-7-carbaguanine + 2 NADP(+) = 7-cyano-7-deazaguanine + 2 NADPH + 3 H(+). The protein operates within tRNA modification; tRNA-queuosine biosynthesis. In terms of biological role, catalyzes the NADPH-dependent reduction of 7-cyano-7-deazaguanine (preQ0) to 7-aminomethyl-7-deazaguanine (preQ1). The sequence is that of NADPH-dependent 7-cyano-7-deazaguanine reductase from Anaeromyxobacter sp. (strain Fw109-5).